The following is a 159-amino-acid chain: Globin CTT-W (159 aa).

A signal peptide spans 1 to 16 (MKFLVILTLCIAGAIA). Positions 17–159 (HCDKAPFIKA…HHAIVYSILE (143 aa)) constitute a Globin domain. Residues His-73 and His-108 each contribute to the heme b site.

The protein belongs to the globin family.

The sequence is that of Globin CTT-W (CTT-W) from Chironomus thummi thummi (Midge).